We begin with the raw amino-acid sequence, 123 residues long: Large ribosomal subunit protein bL12 (123 aa).

Belongs to the bacterial ribosomal protein bL12 family. As to quaternary structure, homodimer. Part of the ribosomal stalk of the 50S ribosomal subunit. Forms a multimeric L10(L12)X complex, where L10 forms an elongated spine to which 2 to 4 L12 dimers bind in a sequential fashion. Binds GTP-bound translation factors.

Its function is as follows. Forms part of the ribosomal stalk which helps the ribosome interact with GTP-bound translation factors. Is thus essential for accurate translation. The polypeptide is Large ribosomal subunit protein bL12 (Shewanella sp. (strain ANA-3)).